The chain runs to 513 residues: ATP synthase subunit alpha (513 aa).

Residue 169-176 (GDRQTGKT) participates in ATP binding.

Belongs to the ATPase alpha/beta chains family. F-type ATPases have 2 components, CF(1) - the catalytic core - and CF(0) - the membrane proton channel. CF(1) has five subunits: alpha(3), beta(3), gamma(1), delta(1), epsilon(1). CF(0) has three main subunits: a(1), b(2) and c(9-12). The alpha and beta chains form an alternating ring which encloses part of the gamma chain. CF(1) is attached to CF(0) by a central stalk formed by the gamma and epsilon chains, while a peripheral stalk is formed by the delta and b chains.

Its subcellular location is the cell inner membrane. It catalyses the reaction ATP + H2O + 4 H(+)(in) = ADP + phosphate + 5 H(+)(out). Produces ATP from ADP in the presence of a proton gradient across the membrane. The alpha chain is a regulatory subunit. This chain is ATP synthase subunit alpha, found in Pectobacterium carotovorum subsp. carotovorum (strain PC1).